A 450-amino-acid polypeptide reads, in one-letter code: C4-dicarboxylate transport protein (450 aa).

A run of 8 helical transmembrane segments spans residues Val25–Ala45, Leu56–Met76, Met90–Val110, Ile162–Ala182, Leu200–Ile220, Leu234–Ala254, Ile319–Gly339, and Ala367–Val387.

Belongs to the dicarboxylate/amino acid:cation symporter (DAACS) (TC 2.A.23) family.

The protein localises to the cell inner membrane. Responsible for the transport of dicarboxylates such as succinate, fumarate, and malate from the periplasm across the membrane. The protein is C4-dicarboxylate transport protein of Acidovorax ebreus (strain TPSY) (Diaphorobacter sp. (strain TPSY)).